We begin with the raw amino-acid sequence, 359 residues long: Probable dual-specificity RNA methyltransferase RlmN (359 aa).

Glutamate 91 serves as the catalytic Proton acceptor. The Radical SAM core domain occupies 97–329 (QHYGHSVCVT…KKNGVNCVVR (233 aa)). Cysteine 104 and cysteine 340 are oxidised to a cystine. [4Fe-4S] cluster-binding residues include cysteine 111, cysteine 115, and cysteine 118. Residues 163-164 (GE), serine 195, 218-220 (SLH), and asparagine 296 each bind S-adenosyl-L-methionine. Cysteine 340 functions as the S-methylcysteine intermediate in the catalytic mechanism.

This sequence belongs to the radical SAM superfamily. RlmN family. [4Fe-4S] cluster serves as cofactor.

It localises to the cytoplasm. The catalysed reaction is adenosine(2503) in 23S rRNA + 2 reduced [2Fe-2S]-[ferredoxin] + 2 S-adenosyl-L-methionine = 2-methyladenosine(2503) in 23S rRNA + 5'-deoxyadenosine + L-methionine + 2 oxidized [2Fe-2S]-[ferredoxin] + S-adenosyl-L-homocysteine. It carries out the reaction adenosine(37) in tRNA + 2 reduced [2Fe-2S]-[ferredoxin] + 2 S-adenosyl-L-methionine = 2-methyladenosine(37) in tRNA + 5'-deoxyadenosine + L-methionine + 2 oxidized [2Fe-2S]-[ferredoxin] + S-adenosyl-L-homocysteine. Specifically methylates position 2 of adenine 2503 in 23S rRNA and position 2 of adenine 37 in tRNAs. This Streptococcus pyogenes serotype M5 (strain Manfredo) protein is Probable dual-specificity RNA methyltransferase RlmN.